We begin with the raw amino-acid sequence, 291 residues long: Tyrosine isonitrile desaturase (291 aa).

Fe cation is bound by residues His-110, Asp-112, and His-259.

Belongs to the TfdA dioxygenase family. Homotrimer in solution. Fe(2+) serves as cofactor.

The enzyme catalyses (2S)-3-(4-hydroxyphenyl)-2-isocyanopropanoate + 2-oxoglutarate + O2 = (2E)-3-(4-hydroxyphenyl)-2-isocyanoprop-2-enoate + succinate + CO2 + H2O. Involved in the biosynthesis of paerucumarin, a cyclized isocyano derivative of tyrosine. Catalyzes the 2-oxoglutarate-dependent oxidation of tyrosine isonitrile. The chain is Tyrosine isonitrile desaturase from Pseudomonas aeruginosa (strain ATCC 15692 / DSM 22644 / CIP 104116 / JCM 14847 / LMG 12228 / 1C / PRS 101 / PAO1).